The sequence spans 180 residues: Fucolectin-2 (180 aa).

The signal sequence occupies residues 1 to 22 (MKVKMIMLLFQILAILTLKSDS). An F5/8 type C-like region spans residues 31-179 (QENVALRGRA…VEVNVLFPAP (149 aa)). N58, D61, N63, and S72 together coordinate Ca(2+). Disulfide bonds link C73–C168, C104–C105, and C130–C146. Alpha-L-fucose-binding residues include H75 and R101. The Cell attachment site motif lies at 101 to 103 (RGD). R108 lines the alpha-L-fucose pocket. The Ca(2+) site is built by C168 and E169.

The protein belongs to the fucolectin family. Homotrimer. Parenchymal hepatocytes.

It localises to the secreted. The protein localises to the extracellular space. Acts as a defensive agent. Recognizes blood group fucosylated oligosaccharides including A, B, H and Lewis B-type antigens. Does not recognize Lewis A antigen and has low affinity for monovalent haptens. The chain is Fucolectin-2 from Anguilla japonica (Japanese eel).